The chain runs to 290 residues: Glutamate racemase (290 aa).

Substrate is bound by residues 32 to 33 and 64 to 65; these read DS and YG. Cys96 functions as the Proton donor/acceptor in the catalytic mechanism. 97–98 is a substrate binding site; it reads NT. Cys208 functions as the Proton donor/acceptor in the catalytic mechanism. Position 209 to 210 (209 to 210) interacts with substrate; that stretch reads TH.

This sequence belongs to the aspartate/glutamate racemases family.

The catalysed reaction is L-glutamate = D-glutamate. It participates in cell wall biogenesis; peptidoglycan biosynthesis. Provides the (R)-glutamate required for cell wall biosynthesis. The chain is Glutamate racemase from Sodalis glossinidius (strain morsitans).